The chain runs to 381 residues: Actin-binding Rho-activating protein (381 aa).

2 disordered regions span residues 39-156 (ENSI…SHGS) and 179-207 (QEEP…PEQD). Positions 69-79 (PTSHQKAQSAP) are enriched in polar residues. Over residues 97–110 (KAPEVSHIKKKEVS) the composition is skewed to basic and acidic residues. Serine 156 and serine 188 each carry phosphoserine. Basic and acidic residues predominate over residues 179-188 (QEEPTWRSDS). 2 actin-binding regions span residues 199–299 (EAEE…AERA) and 300–381 (KRAE…TLLK). Interaction with actin regions lie at residues 240 to 285 (SPVG…GDEG) and 352 to 381 (MRAR…TLLK).

In terms of assembly, binds F-actin and ABLIM1, ABLIM2 and ABLIM3. Interaction with ABLIM2 and ABLIM3 enhances activity.

The protein resides in the cytoplasm. Its subcellular location is the myofibril. It is found in the sarcomere. It localises to the cytoskeleton. Functionally, acts as an activator of serum response factor (SRF)-dependent transcription possibly by inducing nuclear translocation of MKL1 or MKL2 and through a mechanism requiring Rho-actin signaling. This Homo sapiens (Human) protein is Actin-binding Rho-activating protein.